Consider the following 130-residue polypeptide: Methylglyoxal synthase (130 aa).

Residues 1–130 (MSKPRIALIA…DLARNMQDVC (130 aa)) enclose the MGS-like domain. Substrate is bound by residues His11, Lys15, 37-40 (TGTT), and 57-58 (SG). The active-site Proton donor/acceptor is Asp63. His90 lines the substrate pocket.

Belongs to the methylglyoxal synthase family.

It catalyses the reaction dihydroxyacetone phosphate = methylglyoxal + phosphate. Catalyzes the formation of methylglyoxal from dihydroxyacetone phosphate. This is Methylglyoxal synthase from Burkholderia vietnamiensis (strain G4 / LMG 22486) (Burkholderia cepacia (strain R1808)).